Reading from the N-terminus, the 387-residue chain is 1,3-propanediol dehydrogenase (387 aa).

The protein belongs to the iron-containing alcohol dehydrogenase family. Homooctamer. It depends on Fe cation as a cofactor.

The catalysed reaction is propane-1,3-diol + NAD(+) = 3-hydroxypropanal + NADH + H(+). This is 1,3-propanediol dehydrogenase (dhaT) from Klebsiella pneumoniae.